Consider the following 139-residue polypeptide: MPTINQLVRKGRKAVQEKSTAPALQKGFNSLKRKSTDLSAPQKRGVCTSVKTITPKKPNSALRKVARVRLTNGIEVSAYIPGIGHNLQEHSVVLIRGGRIKDLPGVRYHIVRGTLDTAGVANRMQGRSKYGAKRPKDKK.

Positions 1–21 (MPTINQLVRKGRKAVQEKSTA) are disordered. A 3-methylthioaspartic acid modification is found at Asp-102.

Belongs to the universal ribosomal protein uS12 family. As to quaternary structure, part of the 30S ribosomal subunit. Contacts proteins S8 and S17. May interact with IF1 in the 30S initiation complex.

Its function is as follows. With S4 and S5 plays an important role in translational accuracy. Interacts with and stabilizes bases of the 16S rRNA that are involved in tRNA selection in the A site and with the mRNA backbone. Located at the interface of the 30S and 50S subunits, it traverses the body of the 30S subunit contacting proteins on the other side and probably holding the rRNA structure together. The combined cluster of proteins S8, S12 and S17 appears to hold together the shoulder and platform of the 30S subunit. The protein is Small ribosomal subunit protein uS12 of Alkaliphilus metalliredigens (strain QYMF).